We begin with the raw amino-acid sequence, 254 residues long: DNA repair protein RecO (254 aa).

The protein belongs to the RecO family.

Its function is as follows. Involved in DNA repair and RecF pathway recombination. This chain is DNA repair protein RecO, found in Anaeromyxobacter dehalogenans (strain 2CP-1 / ATCC BAA-258).